Consider the following 310-residue polypeptide: MERGMTDIETAETPATHSGFVALIGAPNAGKSTLVNQLVGAKVSIVTHKVQTTRAIVRGIATHDNAQIVFVDTPGIFKPKRRLDTAMVTTAWGGAKDADIVLLLIDAERGIRGDADAILERLKDVRQPMALILNKVDRVKHETLLALSAAANEKVPFKRTFMVSALTGSGCKDLLDYLAQALPAGPWYYPEDQISDLPMRQLAAEITREKLYLRLHQELPYSSHIETEKWEEKPDGSVRIDQTIYVERDSQKKIVLGHKGETIRAIGQAARMEIAGILEQKVHLFLFVKVRENWGDDPERYREMGLEFPH.

In terms of domain architecture, Era-type G spans 17–184 (HSGFVALIGA…LDYLAQALPA (168 aa)). The interval 25-32 (GAPNAGKS) is G1. 25-32 (GAPNAGKS) provides a ligand contact to GTP. The segment at 51–55 (QTTRA) is G2. The G3 stretch occupies residues 72-75 (DTPG). Residues 72–76 (DTPGI) and 134–137 (NKVD) contribute to the GTP site. Residues 134–137 (NKVD) are G4. The segment at 163-165 (VSA) is G5. One can recognise a KH type-2 domain in the interval 215 to 292 (LHQELPYSSH…HLFLFVKVRE (78 aa)).

This sequence belongs to the TRAFAC class TrmE-Era-EngA-EngB-Septin-like GTPase superfamily. Era GTPase family. In terms of assembly, monomer.

It is found in the cytoplasm. Its subcellular location is the cell inner membrane. In terms of biological role, an essential GTPase that binds both GDP and GTP, with rapid nucleotide exchange. Plays a role in 16S rRNA processing and 30S ribosomal subunit biogenesis and possibly also in cell cycle regulation and energy metabolism. This chain is GTPase Era, found in Mesorhizobium japonicum (strain LMG 29417 / CECT 9101 / MAFF 303099) (Mesorhizobium loti (strain MAFF 303099)).